We begin with the raw amino-acid sequence, 161 residues long: Large-conductance mechanosensitive channel (161 aa).

2 consecutive transmembrane segments (helical) span residues 14–34 and 85–105; these read VVDM…VNTL and GLFL…FILV.

Belongs to the MscL family. As to quaternary structure, homopentamer.

Its subcellular location is the cell inner membrane. In terms of biological role, channel that opens in response to stretch forces in the membrane lipid bilayer. May participate in the regulation of osmotic pressure changes within the cell. In Chlorobium luteolum (strain DSM 273 / BCRC 81028 / 2530) (Pelodictyon luteolum), this protein is Large-conductance mechanosensitive channel.